The primary structure comprises 267 residues: Small ribosomal subunit protein uS2 (267 aa).

Residues 224–244 (GRQGEDEDVTEDSFKDNKDAK) form a disordered region. Positions 235-244 (DSFKDNKDAK) are enriched in basic and acidic residues.

The protein belongs to the universal ribosomal protein uS2 family.

The protein is Small ribosomal subunit protein uS2 of Lactiplantibacillus plantarum (strain ATCC BAA-793 / NCIMB 8826 / WCFS1) (Lactobacillus plantarum).